We begin with the raw amino-acid sequence, 2281 residues long: Protein Ycf2 (2281 aa).

1635–1642 contributes to the ATP binding site; it reads GSIGSGRS.

This sequence belongs to the Ycf2 family.

The protein resides in the plastid. Its subcellular location is the chloroplast stroma. Its function is as follows. Probable ATPase of unknown function. Its presence in a non-photosynthetic plant (Epifagus virginiana) and experiments in tobacco indicate that it has an essential function which is probably not related to photosynthesis. The polypeptide is Protein Ycf2 (Coffea arabica (Arabian coffee)).